The chain runs to 203 residues: Acireductone dioxygenase 3 (203 aa).

Residues histidine 96, histidine 98, glutamate 102, and histidine 141 each contribute to the Fe(2+) site. Ni(2+) contacts are provided by histidine 96, histidine 98, glutamate 102, and histidine 141.

It belongs to the acireductone dioxygenase (ARD) family. Fe(2+) is required as a cofactor. Requires Ni(2+) as cofactor.

It is found in the cytoplasm. It localises to the nucleus. It catalyses the reaction 1,2-dihydroxy-5-(methylsulfanyl)pent-1-en-3-one + O2 = 4-methylsulfanyl-2-oxobutanoate + formate + 2 H(+). The catalysed reaction is 1,2-dihydroxy-5-(methylsulfanyl)pent-1-en-3-one + O2 = 3-(methylsulfanyl)propanoate + CO + formate + 2 H(+). It functions in the pathway amino-acid biosynthesis; L-methionine biosynthesis via salvage pathway; L-methionine from S-methyl-5-thio-alpha-D-ribose 1-phosphate: step 5/6. In terms of biological role, catalyzes 2 different reactions between oxygen and the acireductone 1,2-dihydroxy-3-keto-5-methylthiopentene (DHK-MTPene) depending upon the metal bound in the active site. Fe-containing acireductone dioxygenase (Fe-ARD) produces formate and 2-keto-4-methylthiobutyrate (KMTB), the alpha-ketoacid precursor of methionine in the methionine recycle pathway. Ni-containing acireductone dioxygenase (Ni-ARD) produces methylthiopropionate, carbon monoxide and formate, and does not lie on the methionine recycle pathway. This Physcomitrium patens (Spreading-leaved earth moss) protein is Acireductone dioxygenase 3.